We begin with the raw amino-acid sequence, 434 residues long: Maintenance of mitochondrial morphology protein 1 (434 aa).

Over Met-1–Gly-105 the chain is Lumenal. Residues Leu-106 to Phe-126 traverse the membrane as a helical segment. Residues Ser-127 to Asp-434 lie on the Cytoplasmic side of the membrane. The 215-residue stretch at Ser-194–Pro-408 folds into the SMP-LTD domain. The segment at Lys-415 to Asp-434 is disordered.

Belongs to the MMM1 family. In terms of assembly, homodimer. Component of the ER-mitochondria encounter structure (ERMES) or MDM complex, composed of MMM1, MDM10, MDM12 and MDM34. An MMM1 homodimer associates with one molecule of MDM12 on each side in a pairwise head-to-tail manner, and the SMP-LTD domains of MMM1 and MDM12 generate a continuous hydrophobic tunnel for phospholipid trafficking.

The protein resides in the endoplasmic reticulum membrane. Its function is as follows. Component of the ERMES/MDM complex, which serves as a molecular tether to connect the endoplasmic reticulum (ER) and mitochondria. Components of this complex are involved in the control of mitochondrial shape and protein biogenesis, and function in nonvesicular lipid trafficking between the ER and mitochondria. The MDM12-MMM1 subcomplex functions in the major beta-barrel assembly pathway that is responsible for biogenesis of all outer membrane beta-barrel proteins, and acts in a late step after the SAM complex. The MDM10-MDM12-MMM1 subcomplex further acts in the TOM40-specific pathway after the action of the MDM12-MMM1 complex. Essential for establishing and maintaining the structure of mitochondria and maintenance of mtDNA nucleoids. The sequence is that of Maintenance of mitochondrial morphology protein 1 from Kluyveromyces lactis (strain ATCC 8585 / CBS 2359 / DSM 70799 / NBRC 1267 / NRRL Y-1140 / WM37) (Yeast).